A 273-amino-acid chain; its full sequence is Dermonecrotic toxin LarSicTox-alphaIB1aiv (273 aa).

Histidine 5 is an active-site residue. Residues glutamate 25 and aspartate 27 each contribute to the Mg(2+) site. Histidine 41 serves as the catalytic Nucleophile. Intrachain disulfides connect cysteine 45-cysteine 51 and cysteine 47-cysteine 190. Aspartate 85 contributes to the Mg(2+) binding site. An N-linked (GlcNAc...) asparagine glycan is attached at asparagine 250.

Belongs to the arthropod phospholipase D family. Class II subfamily. The cofactor is Mg(2+). Expressed by the venom gland.

The protein resides in the secreted. The enzyme catalyses an N-(acyl)-sphingosylphosphocholine = an N-(acyl)-sphingosyl-1,3-cyclic phosphate + choline. The catalysed reaction is an N-(acyl)-sphingosylphosphoethanolamine = an N-(acyl)-sphingosyl-1,3-cyclic phosphate + ethanolamine. It catalyses the reaction a 1-acyl-sn-glycero-3-phosphocholine = a 1-acyl-sn-glycero-2,3-cyclic phosphate + choline. It carries out the reaction a 1-acyl-sn-glycero-3-phosphoethanolamine = a 1-acyl-sn-glycero-2,3-cyclic phosphate + ethanolamine. Dermonecrotic toxins cleave the phosphodiester linkage between the phosphate and headgroup of certain phospholipids (sphingolipid and lysolipid substrates), forming an alcohol (often choline) and a cyclic phosphate. This toxin acts on sphingomyelin (SM). It may also act on ceramide phosphoethanolamine (CPE), lysophosphatidylcholine (LPC) and lysophosphatidylethanolamine (LPE), but not on lysophosphatidylserine (LPS), and lysophosphatidylglycerol (LPG). It acts by transphosphatidylation, releasing exclusively cyclic phosphate products as second products. Induces dermonecrosis, hemolysis, increased vascular permeability, edema, inflammatory response, and platelet aggregation. The protein is Dermonecrotic toxin LarSicTox-alphaIB1aiv of Loxosceles arizonica (Arizona brown spider).